The chain runs to 239 residues: MVIKAQSPAGFAEEYIIESIWNNRFPPGTILPAERELSELIGVTRTTLREVLQRLARDGWLTIQHGKPTKVNNFWETSGLNILETLARLDHESVPQLIDNLLSVRTNISTIFIRTALRQHPDKAQEVLATAHEVADHADAFADLDYNIFRGLAFASGNPIYGLILNGMKGLYTRIGRHYFANPEARSLALGFYHKLSSLCEQGAHDQVYETVRRYGHDSGEIWHRMQKNLPGDLAIQGR.

In terms of domain architecture, HTH gntR-type spans 6–74; the sequence is QSPAGFAEEY…HGKPTKVNNF (69 aa). The segment at residues 34-53 is a DNA-binding region (H-T-H motif); sequence ERELSELIGVTRTTLREVLQ.

In terms of assembly, homodimer.

It localises to the cytoplasm. Its function is as follows. Multifunctional regulator of fatty acid metabolism. Represses transcription of at least eight genes required for fatty acid transport and beta-oxidation including fadA, fadB, fadD, fadL and fadE. Activates transcription of at least three genes required for unsaturated fatty acid biosynthesis: fabA, fabB and iclR, the gene encoding the transcriptional regulator of the aceBAK operon encoding the glyoxylate shunt enzymes. Binding of FadR is specifically inhibited by long chain fatty acyl-CoA compounds. This Salmonella typhimurium (strain LT2 / SGSC1412 / ATCC 700720) protein is Fatty acid metabolism regulator protein.